A 530-amino-acid chain; its full sequence is Glucose-6-phosphate isomerase (530 aa).

Glu-356 acts as the Proton donor in catalysis. Catalysis depends on residues His-387 and Lys-502.

The protein belongs to the GPI family.

Its subcellular location is the cytoplasm. The catalysed reaction is alpha-D-glucose 6-phosphate = beta-D-fructose 6-phosphate. Its pathway is carbohydrate biosynthesis; gluconeogenesis. The protein operates within carbohydrate degradation; glycolysis; D-glyceraldehyde 3-phosphate and glycerone phosphate from D-glucose: step 2/4. Functionally, catalyzes the reversible isomerization of glucose-6-phosphate to fructose-6-phosphate. The polypeptide is Glucose-6-phosphate isomerase (Borrelia garinii subsp. bavariensis (strain ATCC BAA-2496 / DSM 23469 / PBi) (Borreliella bavariensis)).